Consider the following 140-residue polypeptide: Actin-depolymerizing factor 8 (140 aa).

At Ser-6 the chain carries Phosphoserine. The ADF-H domain maps to 7–139 (GMHVNDECKI…SLDIIKGRLN (133 aa)).

The protein belongs to the actin-binding proteins ADF family. In terms of tissue distribution, expressed in the root trichoblast cells and developed root hairs.

Its subcellular location is the cytoplasm. It localises to the cytoskeleton. In terms of biological role, actin-depolymerizing protein. Severs actin filaments (F-actin) and binds to actin monomers. The sequence is that of Actin-depolymerizing factor 8 (ADF8) from Arabidopsis thaliana (Mouse-ear cress).